The sequence spans 1133 residues: SH3 and PX domain-containing protein 2A (1133 aa).

The 125-residue stretch at 4 to 128 folds into the PX domain; sequence YCVQDATVVD…RFFEARPEDV (125 aa). The 60-residue stretch at 166–225 folds into the SH3 1 domain; sequence MILEQYVVVSNYKKQENSELSLQAGEVVDVIEKNESGWWFVSTSEEQGWVPATYLEAQNG. Thr-256 is subject to Phosphothreonine. Residues 266–325 form the SH3 2 domain; sequence SREEKYVTVQPYTSQSKDEIGFEKGVTVEVIRKNLEGWWYIRYLGKEGWAPASYLKKAKD. 2 positions are modified to phosphoserine: Ser-406 and Ser-421. 4 disordered regions span residues 415–446, 505–840, 899–924, and 941–964; these read QRAQ…PPEP, RKKP…EWEG, NEQP…GKSD, and QSKK…SGTP. The SH3 3 domain maps to 448-507; sequence SVEVEYYTIAEFQSCISDGISFRGGQKAEVIDKNSGGWWYVQIGEKEGWAPASYIDKRKK. Positions 546–555 are enriched in basic and acidic residues; the sequence is DSPRKLKYEE. A phosphoserine mark is found at Ser-547 and Ser-567. Residues 567–576 are compositionally biased toward acidic residues; it reads SEPELSEEPV. Over residues 577-586 the composition is skewed to basic and acidic residues; that stretch reads EDRASGERRP. Phosphoserine is present on Ser-593. Over residues 608–620 the composition is skewed to acidic residues; the sequence is SSEDVALEEETIY. Composition is skewed to low complexity over residues 634 to 652, 658 to 670, and 686 to 715; these read SARG…SLSL, PKSG…SLLK, and SSAS…SKTS. Ser-644 bears the Phosphoserine mark. Thr-731 is modified (phosphothreonine). A phosphoserine mark is found at Ser-767, Ser-769, and Ser-819. Thr-829 carries the post-translational modification Phosphothreonine. One can recognise an SH3 4 domain in the interval 840 to 899; it reads GPATSYMTCSAYQKVQDSEISFPAGVEVQVLEKQESGWWYVRFGELEGWAPSHYLVLDEN. A coiled-coil region spans residues 917–946; the sequence is RQNEGKSDSLEKIERRVQALNTVNQSKKAT. Phosphoserine is present on residues Ser-1002, Ser-1016, Ser-1017, and Ser-1038. The interval 1029–1059 is disordered; sequence KGRLAERAASQGSDSPLLPAQRNSIPVSPVR. Residues 1072 to 1133 form the SH3 5 domain; sequence NLKDVYVSIA…VPSNYLEKKN (62 aa).

The protein belongs to the SH3PXD2 family. In terms of assembly, interacts (via N-terminus) with CYBA. Interacts with ADAM12, ADAM15 and ADAM19. Interacts with NOXO1. Interacts (via SH3 domains) with NOXA1. Interacts with FASLG. Interacts (via PX domain) with RAB40B (GTP-bound); interaction promotes invadopodia-mediated extracellular matrix degradation. In terms of processing, tyrosine phosphorylated by SRC. Phosphorylation plays a regulatory role in the protein localization. The intramolecular interaction of the PX domain with the third SH3 domain maintains the protein in the cytoplasm and phosphorylation disrupts this interaction, resulting in the redistribution of the protein from cytoplasm to the perimembrane region. Phosphorylated on serine upon DNA damage, probably by ATM or ATR. In terms of tissue distribution, found in several cancer cell lines, particularly invasive breast carcinomas and melanomas.

The protein localises to the cytoplasm. Its subcellular location is the cell projection. The protein resides in the podosome. Functionally, adapter protein involved in invadopodia and podosome formation, extracellular matrix degradation and invasiveness of some cancer cells. Binds matrix metalloproteinases (ADAMs), NADPH oxidases (NOXs) and phosphoinositides. Acts as an organizer protein that allows NOX1- or NOX3-dependent reactive oxygen species (ROS) generation and ROS localization. In association with ADAM12, mediates the neurotoxic effect of amyloid-beta peptide. The protein is SH3 and PX domain-containing protein 2A of Homo sapiens (Human).